The primary structure comprises 329 residues: MASQLTDAFARKFYYLRLSITDVCNFRCTYCLPDGYKPGGVTNNGFLTVDEIRRVTRAFASLGTEKVRLTGGEPSLRRDFTDIIAAVGENDAIRQIAVTTNGYRLARDAASWREAGLTGVNVSVDSLDARQFHAITGQDKFRQVMAGIDAAFDAGFKKVKVNTVLMRDVNHHQLDTFLAWIQPRPIQLRFIELMETGEGSDLFRKHHISGQVLRDELIKRGWIHQLRQRSDGPAQVFCHPDYVGEIGLIMPYEKDFCATCNRLRVSSVGKLHLCLFGDGGVSLRDLLQDDAQQYALEERISDALREKKQTHFLHQSNTGITQNLSYIGG.

Residues 8-234 (AFARKFYYLR…QLRQRSDGPA (227 aa)) form the Radical SAM core domain. Arg17 contacts GTP. Residues Cys24 and Cys28 each contribute to the [4Fe-4S] cluster site. Tyr30 is an S-adenosyl-L-methionine binding site. Cys31 provides a ligand contact to [4Fe-4S] cluster. Arg68 contacts GTP. Residue Gly72 participates in S-adenosyl-L-methionine binding. A GTP-binding site is contributed by Thr99. S-adenosyl-L-methionine is bound at residue Ser123. Lys160 lines the GTP pocket. Met194 serves as a coordination point for S-adenosyl-L-methionine. Residues Cys257 and Cys260 each contribute to the [4Fe-4S] cluster site. GTP is bound at residue 262–264 (RLR). Cys274 is a [4Fe-4S] cluster binding site.

This sequence belongs to the radical SAM superfamily. MoaA family. Monomer and homodimer. [4Fe-4S] cluster is required as a cofactor.

The catalysed reaction is GTP + AH2 + S-adenosyl-L-methionine = (8S)-3',8-cyclo-7,8-dihydroguanosine 5'-triphosphate + 5'-deoxyadenosine + L-methionine + A + H(+). It participates in cofactor biosynthesis; molybdopterin biosynthesis. In terms of biological role, catalyzes the cyclization of GTP to (8S)-3',8-cyclo-7,8-dihydroguanosine 5'-triphosphate. The sequence is that of GTP 3',8-cyclase from Salmonella heidelberg (strain SL476).